An 86-amino-acid polypeptide reads, in one-letter code: uncharacterized protein (86 aa).

The signal sequence occupies residues 1–22 (MKTINTVVAAMALSTLSFGVFA).

This sequence belongs to the BhsA/McbA family.

It is found in the periplasm. This is an uncharacterized protein from Escherichia coli O6:H1 (strain CFT073 / ATCC 700928 / UPEC).